The sequence spans 205 residues: Ras-related protein Rab-1A (205 aa).

Serine 2 is modified (N-acetylserine). Residues serine 20, glycine 21, glycine 23, lysine 24, serine 25, cysteine 26, glutamate 38, and threonine 43 each coordinate GTP. Residue serine 25 participates in Mg(2+) binding. Positions 34–48 (DTYTESYISTIGVDF) match the Switch 1 motif. Threonine 43 contributes to the Mg(2+) binding site. Residues lysine 49 and lysine 61 each participate in a glycyl lysine isopeptide (Lys-Gly) (interchain with G-Cter in ubiquitin) cross-link. A Mg(2+)-binding site is contributed by aspartate 66. Residues 66 to 83 (DTAGQERFRTITSSYYRG) carry the Switch 2 motif. 6 residues coordinate GTP: glycine 69, asparagine 124, lysine 125, aspartate 127, alanine 155, and lysine 156. Positions 178 to 205 (PGATAGGAEKSNVKIQSTPVKQSGGGCC) are disordered. At serine 194 the chain carries Phosphoserine; by CDK1. Residues cysteine 204 and cysteine 205 are each lipidated (S-geranylgeranyl cysteine).

It belongs to the small GTPase superfamily. Rab family. As to quaternary structure, may interact with YIPF5. Interacts with C9orf72; the interaction mediates recruitment of RAB1A to the ATG1/ULK1 kinase complex. Interacts with GDI1; this promotes dissociation from membranes. Requires Mg(2+) as cofactor. Phosphorylated by CDK1 kinase during mitosis. In terms of processing, ubiquitinated via 'Lys-11'-linked ubiquitination on Lys-49 and Lys-61; impairing the recruitment of guanosine diphosphate (GDP) dissociation inhibitor 1/GDI1.

Its subcellular location is the golgi apparatus. The protein resides in the endoplasmic reticulum. It localises to the early endosome. The protein localises to the cytoplasm. It is found in the cytosol. Its subcellular location is the membrane. The protein resides in the melanosome. It carries out the reaction GTP + H2O = GDP + phosphate + H(+). With respect to regulation, regulated by guanine nucleotide exchange factors (GEFs) which promote the exchange of bound GDP for free GTP. Regulated by GTPase activating proteins (GAPs) which increase the GTP hydrolysis activity. Inhibited by GDP dissociation inhibitors (GDIs). Functionally, the small GTPases Rab are key regulators of intracellular membrane trafficking, from the formation of transport vesicles to their fusion with membranes. Rabs cycle between an inactive GDP-bound form and an active GTP-bound form that is able to recruit to membranes different sets of downstream effectors directly responsible for vesicle formation, movement, tethering and fusion. RAB1A regulates vesicular protein transport from the endoplasmic reticulum (ER) to the Golgi compartment and on to the cell surface, and plays a role in IL-8 and growth hormone secretion. Required to modulate the compacted morphology of the Golgi. Regulates the level of CASR present at the cell membrane. Plays a role in cell adhesion and cell migration, via its role in protein trafficking. Plays a role in autophagosome assembly and cellular defense reactions against pathogenic bacteria. Plays a role in microtubule-dependent protein transport by early endosomes and in anterograde melanosome transport. This chain is Ras-related protein Rab-1A (RAB1A), found in Sus scrofa (Pig).